The sequence spans 182 residues: Inner membrane assembly complex subunit 17 (182 aa).

Residues 1–45 (MLKRRSNALITLSRTKLFPITTVAYYHRRLLNQQRRAVSTSPKKE) constitute a mitochondrion transit peptide. The Mitochondrial matrix portion of the chain corresponds to 46-107 (IKSLEDLANL…EIPVKRFIRP (62 aa)). A helical membrane pass occupies residues 108–127 (LWMFILMGSSVYLLLHFSWW). Positions 128–158 (KLEHEERESQLKKEVEILEHQLNELIVQDKT) form a coiled coil. Residues 128 to 182 (KLEHEERESQLKKEVEILEHQLNELIVQDKTHNTSRGKGSNESTHMKPWYRRWFW) are Mitochondrial intermembrane-facing.

The protein belongs to the INA17 family. As to quaternary structure, component of the inner membrane assembly (INA) complex, composed of INA17 and INA22. Interacts with a subset of F(1)F(0)-ATP synthase subunits of the F(1)-domain and the peripheral stalk.

The protein localises to the mitochondrion inner membrane. Component of the INA complex (INAC) that promotes the biogenesis of mitochondrial F(1)F(0)-ATP synthase. INAC facilitates the assembly of the peripheral stalk and promotes the assembly of the catalytic F(1)-domain with the membrane-embedded F(0)-domain. This Saccharomyces cerevisiae (strain RM11-1a) (Baker's yeast) protein is Inner membrane assembly complex subunit 17.